Reading from the N-terminus, the 635-residue chain is Threonine--tRNA ligase (635 aa).

The 61-residue stretch at 1-61 (MVSIRLPDGS…DHDVALAIVT (61 aa)) folds into the TGS domain. Residues 242–533 (DHRKLGKQLD…LIEHHAGAMP (292 aa)) are catalytic. Residues Cys-333, His-384, and His-510 each contribute to the Zn(2+) site.

This sequence belongs to the class-II aminoacyl-tRNA synthetase family. In terms of assembly, homodimer. Zn(2+) serves as cofactor.

Its subcellular location is the cytoplasm. It catalyses the reaction tRNA(Thr) + L-threonine + ATP = L-threonyl-tRNA(Thr) + AMP + diphosphate + H(+). Functionally, catalyzes the attachment of threonine to tRNA(Thr) in a two-step reaction: L-threonine is first activated by ATP to form Thr-AMP and then transferred to the acceptor end of tRNA(Thr). Also edits incorrectly charged L-seryl-tRNA(Thr). The polypeptide is Threonine--tRNA ligase (Paraburkholderia phytofirmans (strain DSM 17436 / LMG 22146 / PsJN) (Burkholderia phytofirmans)).